A 126-amino-acid polypeptide reads, in one-letter code: Aspartate 1-decarboxylase (126 aa).

The Schiff-base intermediate with substrate; via pyruvic acid role is filled by serine 25. The residue at position 25 (serine 25) is a Pyruvic acid (Ser). Threonine 57 provides a ligand contact to substrate. Tyrosine 58 (proton donor) is an active-site residue. A substrate-binding site is contributed by 73-75 (GSA).

It belongs to the PanD family. In terms of assembly, heterooctamer of four alpha and four beta subunits. The cofactor is pyruvate. Post-translationally, is synthesized initially as an inactive proenzyme, which is activated by self-cleavage at a specific serine bond to produce a beta-subunit with a hydroxyl group at its C-terminus and an alpha-subunit with a pyruvoyl group at its N-terminus.

It is found in the cytoplasm. It catalyses the reaction L-aspartate + H(+) = beta-alanine + CO2. Its pathway is cofactor biosynthesis; (R)-pantothenate biosynthesis; beta-alanine from L-aspartate: step 1/1. In terms of biological role, catalyzes the pyruvoyl-dependent decarboxylation of aspartate to produce beta-alanine. In Chromobacterium violaceum (strain ATCC 12472 / DSM 30191 / JCM 1249 / CCUG 213 / NBRC 12614 / NCIMB 9131 / NCTC 9757 / MK), this protein is Aspartate 1-decarboxylase.